The primary structure comprises 410 residues: Arginine biosynthesis bifunctional protein ArgJ (410 aa).

Substrate is bound by residues Thr-160, Lys-186, Thr-197, Glu-283, Asn-405, and Thr-410. Thr-197 serves as the catalytic Nucleophile.

The protein belongs to the ArgJ family. In terms of assembly, heterotetramer of two alpha and two beta chains.

The protein resides in the cytoplasm. It catalyses the reaction N(2)-acetyl-L-ornithine + L-glutamate = N-acetyl-L-glutamate + L-ornithine. The enzyme catalyses L-glutamate + acetyl-CoA = N-acetyl-L-glutamate + CoA + H(+). It functions in the pathway amino-acid biosynthesis; L-arginine biosynthesis; L-ornithine and N-acetyl-L-glutamate from L-glutamate and N(2)-acetyl-L-ornithine (cyclic): step 1/1. It participates in amino-acid biosynthesis; L-arginine biosynthesis; N(2)-acetyl-L-ornithine from L-glutamate: step 1/4. Functionally, catalyzes two activities which are involved in the cyclic version of arginine biosynthesis: the synthesis of N-acetylglutamate from glutamate and acetyl-CoA as the acetyl donor, and of ornithine by transacetylation between N(2)-acetylornithine and glutamate. The protein is Arginine biosynthesis bifunctional protein ArgJ of Geobacillus kaustophilus (strain HTA426).